The primary structure comprises 406 residues: Multifunctional CCA protein (406 aa).

ATP contacts are provided by glycine 8 and arginine 11. CTP-binding residues include glycine 8 and arginine 11. Mg(2+) is bound by residues aspartate 21 and aspartate 23. Residues arginine 91, arginine 138, and arginine 141 each contribute to the ATP site. Residues arginine 91, arginine 138, and arginine 141 each contribute to the CTP site. The 103-residue stretch at 229 to 331 folds into the HD domain; sequence TGIHQEMVSD…LELLGRCDAL (103 aa).

The protein belongs to the tRNA nucleotidyltransferase/poly(A) polymerase family. Bacterial CCA-adding enzyme type 1 subfamily. Monomer. Can also form homodimers and oligomers. The cofactor is Mg(2+). Ni(2+) serves as cofactor.

The catalysed reaction is a tRNA precursor + 2 CTP + ATP = a tRNA with a 3' CCA end + 3 diphosphate. The enzyme catalyses a tRNA with a 3' CCA end + 2 CTP + ATP = a tRNA with a 3' CCACCA end + 3 diphosphate. Catalyzes the addition and repair of the essential 3'-terminal CCA sequence in tRNAs without using a nucleic acid template. Adds these three nucleotides in the order of C, C, and A to the tRNA nucleotide-73, using CTP and ATP as substrates and producing inorganic pyrophosphate. tRNA 3'-terminal CCA addition is required both for tRNA processing and repair. Also involved in tRNA surveillance by mediating tandem CCA addition to generate a CCACCA at the 3' terminus of unstable tRNAs. While stable tRNAs receive only 3'-terminal CCA, unstable tRNAs are marked with CCACCA and rapidly degraded. In Stenotrophomonas maltophilia (strain R551-3), this protein is Multifunctional CCA protein.